A 479-amino-acid polypeptide reads, in one-letter code: Inhibitory synaptic factor 2A (479 aa).

Position 177 is a phosphoserine (serine 177). Disordered regions lie at residues 226–247 (GRAK…ALRR) and 315–338 (SPEC…PSPT). Over residues 228–237 (AKQDRGRPNS) the composition is skewed to basic and acidic residues. The segment covering 318 to 337 (CSEQPSQTHTPPGLGNQPSP) has biased composition (polar residues). Residues 353–379 (TEVVDLKAQLQMMENLISSSQETIKVL) adopt a coiled-coil conformation. The segment covering 449–461 (SPYSQETYSSTPK) has biased composition (polar residues). Residues 449–472 (SPYSQETYSSTPKQKSKTESKKHG) are disordered.

The protein belongs to the INSYN2 family. In terms of assembly, interacts with GPHN.

It is found in the postsynaptic density. Component of the protein machinery at the inhibitory synapses, probably acting as a scaffold. Inhibitory synapses dampen neuronal activity through postsynaptic hyperpolarization. This synaptic inhibition is fundamental for the functioning of the central nervous system, shaping and orchestrating the flow of information through neuronal networks to generate a precise neural code. The chain is Inhibitory synaptic factor 2A from Homo sapiens (Human).